We begin with the raw amino-acid sequence, 64 residues long: uncharacterized protein (64 aa).

The signal sequence occupies residues 1–26; sequence MVVKENFCGACLTIPLAFAGAGTAIG. Residues 33–53 traverse the membrane as a helical segment; that stretch reads IKKWSIVITIISLLLTVWFIY.

It belongs to the IIV-6 010R family.

It localises to the host membrane. This is an uncharacterized protein from Aedes vexans (Inland floodwater mosquito).